The primary structure comprises 287 residues: tRNA (guanine(9)-N1)-methyltransferase (287 aa).

The interval 1 to 27 (MSDTSDLVDGKWQRLPPVPEGMSKSQW) is disordered. Residues 79 to 272 (EPRVNRDQVA…SVIPSRKLDP (194 aa)) form the SAM-dependent MTase TRM10-type domain. Residues 179-180 (LT), Gly-199, 203-207 (DKNRH), Cys-211, Leu-225, and 237-239 (KVL) contribute to the S-adenosyl-L-methionine site. Asp-203 acts as the Proton acceptor in catalysis. Over residues 268–278 (RKLDPVKEKEQ) the composition is skewed to basic and acidic residues. Residues 268–287 (RKLDPVKEKEQQQQQQQQQQ) form a disordered region.

The protein belongs to the class IV-like SAM-binding methyltransferase superfamily. TRM10 family. As to quaternary structure, monomer.

It localises to the cytoplasm. The protein localises to the nucleus. It catalyses the reaction guanosine(9) in tRNA + S-adenosyl-L-methionine = N(1)-methylguanosine(9) in tRNA + S-adenosyl-L-homocysteine + H(+). Functionally, S-adenosyl-L-methionine-dependent guanine N(1)-methyltransferase that catalyzes the formation of N(1)-methylguanine at position 9 (m1G9) in cytoplasmic tRNA. The polypeptide is tRNA (guanine(9)-N1)-methyltransferase (Candida glabrata (strain ATCC 2001 / BCRC 20586 / JCM 3761 / NBRC 0622 / NRRL Y-65 / CBS 138) (Yeast)).